Here is a 1291-residue protein sequence, read N- to C-terminus: 1-phosphatidylinositol 4,5-bisphosphate phosphodiesterase gamma-1 (1291 aa).

Alanine 2 carries the N-acetylalanine modification. The PH 1 domain maps to 27–142 (RSLEVGTVMT…WIRGLTWLME (116 aa)). Positions 152-187 (QIERWLRKQFYSVDRNREDRISAKDLKNMLSQVNYR) constitute an EF-hand domain. Positions 165, 167, 169, 171, and 176 each coordinate Ca(2+). The 145-residue stretch at 320–464 (DTMNNPLSHY…LKRKILIKHK (145 aa)) folds into the PI-PLC X-box domain. Active-site residues include histidine 335 and histidine 380. Positions 489 to 523 (SIKNGILYLEDPVNHEWYPHYFVLTSSKIYYSEET) constitute a PH 2; first part domain. A Phosphotyrosine modification is found at tyrosine 506. The interval 522–544 (ETSSDQGNEDEEEPKEASGSTEL) is disordered. SH2 domains are found at residues 550-657 (WFHG…SEPV) and 668-756 (WYHA…RYPI). At tyrosine 771 the chain carries Phosphotyrosine; by SYK. Tyrosine 775 and tyrosine 783 each carry phosphotyrosine. At tyrosine 783 the chain carries Phosphotyrosine; by ITK, SYK and TXK. The region spanning 791 to 851 (TFKCAVKALF…PSNYVEEMVS (61 aa)) is the SH3 domain. Residues 895–931 (FVFSISMASVAHWSLDVAADSQEELQDWVKKIREVAQ) enclose the PH 2; second part domain. One can recognise a PI-PLC Y-box domain in the interval 953 to 1070 (LSELVVYCRP…GYVLQPSVMR (118 aa)). Tyrosine 977 carries the phosphotyrosine modification. A C2 domain is found at 1071 to 1194 (DEAFDPFDKS…TGYRAVPLKN (124 aa)). Phosphoserine is present on residues serine 1222, serine 1228, and serine 1249. Residue tyrosine 1254 is modified to Phosphotyrosine. Serine 1264 is modified (phosphoserine). The disordered stretch occupies residues 1271–1291 (HFDGRDRRTPRRTRVNGDNRL).

Interacts with AGAP2 via its SH3 domain. Interacts (via SH2 domain) with RET. Interacts with FLT1 (tyrosine-phosphorylated). Interacts (via SH2 domain) with FGFR1, FGFR2, FGFR3 and FGFR4 (phosphorylated). Interacts with LAT (phosphorylated) upon TCR activation. Interacts (via SH3 domain) with the Pro-rich domain of TNK1. Associates with BLNK, VAV1, GRB2 and NCK1 in a B-cell antigen receptor-dependent fashion. Interacts with CBLB in activated T-cells; which inhibits phosphorylation. Interacts with SHB. Interacts (via SH3 domain) with the Arg/Gly-rich-flanked Pro-rich domains of KHDRBS1/SAM68. This interaction is selectively regulated by arginine methylation of KHDRBS1/SAM68. Interacts with INPP5D/SHIP1, THEMIS and CLNK. Interacts with AXL, FLT4 and KIT. Interacts with RALGPS1. Interacts (via the SH2 domains) with VIL1 (phosphorylated at C-terminus tyrosine phosphorylation sites). Interacts (via SH2 domain) with PDGFRA and PDGFRB (tyrosine phosphorylated). Interacts with PIP5K1C. Interacts with NTRK1 and NTRK2 (phosphorylated upon ligand-binding). Interacts with SYK; activates PLCG1. Interacts with GRB2, LAT and THEMIS upon TCR activation in thymocytes. Interacts with TESPA1; the association is increased with prolonged stimulation of the TCR and may facilitate the assembly of the LAT signalosome. Interacts (via C-terminal proline-rich domain (PRD)) with PLCG1 (via SH3 domain); this interaction leads to guanine nucleotide exchange from PlCG1 to DNM1 and enhances DNM1-dependent endocytosis. It depends on Ca(2+) as a cofactor. Post-translationally, ubiquitinated by CBLB in activated T-cells. In terms of processing, tyrosine phosphorylated in response to signaling via activated FLT3, KIT and PDGFRA. Tyrosine phosphorylated by activated FGFR1, FGFR2, FGFR3 and FGFR4. Tyrosine phosphorylated by activated FLT1 and KDR. Tyrosine phosphorylated by activated PDGFRB. The receptor-mediated activation of PLCG1 involves its phosphorylation by tyrosine kinases, in response to ligation of a variety of growth factor receptors and immune system receptors. For instance, SYK phosphorylates and activates PLCG1 in response to ligation of the B-cell receptor. May be dephosphorylated by PTPRJ. Phosphorylated by ITK and TXK on Tyr-783 upon TCR activation in T-cells.

The protein resides in the cell projection. It is found in the lamellipodium. The protein localises to the ruffle. It carries out the reaction a 1,2-diacyl-sn-glycero-3-phospho-(1D-myo-inositol-4,5-bisphosphate) + H2O = 1D-myo-inositol 1,4,5-trisphosphate + a 1,2-diacyl-sn-glycerol + H(+). The catalysed reaction is a 1,2-diacyl-sn-glycero-3-phospho-(1D-myo-inositol) + H2O = 1D-myo-inositol 1-phosphate + a 1,2-diacyl-sn-glycerol + H(+). Activated by phosphorylation on tyrosine residues. Functionally, mediates the production of the second messenger molecules diacylglycerol (DAG) and inositol 1,4,5-trisphosphate (IP3). Plays an important role in the regulation of intracellular signaling cascades. Becomes activated in response to ligand-mediated activation of receptor-type tyrosine kinases, such as PDGFRA, PDGFRB, EGFR, FGFR1, FGFR2, FGFR3 and FGFR4. Plays a role in actin reorganization and cell migration. Guanine nucleotide exchange factor that binds the GTPase DNM1 and catalyzes the dissociation of GDP, allowing a GTP molecule to bind in its place, therefore enhancing DNM1-dependent endocytosis. The sequence is that of 1-phosphatidylinositol 4,5-bisphosphate phosphodiesterase gamma-1 from Bos taurus (Bovine).